Consider the following 278-residue polypeptide: HTH-type transcriptional activator RhaS (278 aa).

The HTH araC/xylS-type domain occupies 174 to 272 (NQLMAWLEDH…NWSPRDIRQG (99 aa)). 2 consecutive DNA-binding regions (H-T-H motif) follow at residues 191–212 (EAVA…KQHT) and 239–262 (VTEI…RREF).

As to quaternary structure, binds DNA as a dimer.

Its subcellular location is the cytoplasm. Activates expression of the rhaBAD and rhaT operons. This chain is HTH-type transcriptional activator RhaS, found in Salmonella heidelberg (strain SL476).